The sequence spans 96 residues: Glutamyl-tRNA(Gln) amidotransferase subunit C (96 aa).

This sequence belongs to the GatC family. Heterotrimer of A, B and C subunits.

It catalyses the reaction L-glutamyl-tRNA(Gln) + L-glutamine + ATP + H2O = L-glutaminyl-tRNA(Gln) + L-glutamate + ADP + phosphate + H(+). The catalysed reaction is L-aspartyl-tRNA(Asn) + L-glutamine + ATP + H2O = L-asparaginyl-tRNA(Asn) + L-glutamate + ADP + phosphate + 2 H(+). Its function is as follows. Allows the formation of correctly charged Asn-tRNA(Asn) or Gln-tRNA(Gln) through the transamidation of misacylated Asp-tRNA(Asn) or Glu-tRNA(Gln) in organisms which lack either or both of asparaginyl-tRNA or glutaminyl-tRNA synthetases. The reaction takes place in the presence of glutamine and ATP through an activated phospho-Asp-tRNA(Asn) or phospho-Glu-tRNA(Gln). The polypeptide is Glutamyl-tRNA(Gln) amidotransferase subunit C (Halalkalibacterium halodurans (strain ATCC BAA-125 / DSM 18197 / FERM 7344 / JCM 9153 / C-125) (Bacillus halodurans)).